Here is a 37-residue protein sequence, read N- to C-terminus: Delta-amaurobitoxin-Pl1a (37 aa).

Intrachain disulfides connect cysteine 2–cysteine 18, cysteine 9–cysteine 23, cysteine 17–cysteine 33, and cysteine 25–cysteine 31. A Serine amide modification is found at serine 37.

It belongs to the neurotoxin 07 (Beta/delta-agtx) family. 02 (aga-3) subfamily. In terms of tissue distribution, expressed by the venom gland.

It localises to the secreted. Functionally, binds at site 4 of sodium channels (Nav) and inhibits the fast inactivation of cockroach channels. This toxin is active only on insects. Has a potent activity against S.litura larvae. The polypeptide is Delta-amaurobitoxin-Pl1a (Pireneitega luctuosa (Tangled nest spider)).